The chain runs to 478 residues: Zinc metalloproteinase/disintegrin ussurin (478 aa).

The signal sequence occupies residues 1–20 (MIQVLLVTICLAAFPYQGSS). The propeptide occupies 21 to 190 (IILESGNVND…KKASPLVVTT (170 aa)). The region spanning 193 to 389 (RYVELVVVAD…RNPQCILNKP (197 aa)) is the Peptidase M12B domain. The Ca(2+) site is built by Glu-196 and Asp-280. 3 disulfide bridges follow: Cys-304–Cys-384, Cys-344–Cys-368, and Cys-346–Cys-351. Residue His-329 coordinates Zn(2+). Residue Glu-330 is part of the active site. His-333 and His-339 together coordinate Zn(2+). Positions 384 and 387 each coordinate Ca(2+). The propeptide occupies 390 to 413 (LRTDIVSTPVSGNELLEAGEECDC). Residues 397–478 (TPVSGNELLE…AGCPRNPFHA (82 aa)) form the Disintegrin domain. 6 disulfides stabilise this stretch: Cys-411–Cys-426, Cys-413–Cys-421, Cys-420–Cys-443, Cys-434–Cys-440, Cys-439–Cys-464, and Cys-452–Cys-471. The short motif at 456 to 458 (RGD) is the Cell attachment site element.

This sequence belongs to the venom metalloproteinase (M12B) family. P-II subfamily. P-IIa sub-subfamily. Monomer. Zn(2+) serves as cofactor. As to expression, expressed by the venom gland.

The protein localises to the secreted. Functionally, impairs hemostasis in the envenomed animal. Its function is as follows. Inhibits platelet aggregation induced by ADP, thrombin, platelet-activating factor and collagen. Acts by inhibiting fibrinogen interaction with platelet receptors GPIIb/GPIIIa (ITGA2B/ITGB3). This Gloydius ussuriensis (Ussuri mamushi) protein is Zinc metalloproteinase/disintegrin ussurin.